We begin with the raw amino-acid sequence, 357 residues long: Glutamate 5-kinase (357 aa).

Lysine 7 contacts ATP. Substrate-binding residues include serine 43, aspartate 130, and asparagine 142. ATP is bound by residues 162–163 (TD) and 205–211 (TGGMTTK). The PUA domain occupies 270–341 (EGELCLDQGA…QALSVVTDAE (72 aa)).

Belongs to the glutamate 5-kinase family.

The protein resides in the cytoplasm. It carries out the reaction L-glutamate + ATP = L-glutamyl 5-phosphate + ADP. It participates in amino-acid biosynthesis; L-proline biosynthesis; L-glutamate 5-semialdehyde from L-glutamate: step 1/2. Its function is as follows. Catalyzes the transfer of a phosphate group to glutamate to form L-glutamate 5-phosphate. The sequence is that of Glutamate 5-kinase from Synechococcus sp. (strain CC9902).